A 328-amino-acid polypeptide reads, in one-letter code: Methionyl-tRNA formyltransferase (328 aa).

Position 110 to 113 (110 to 113) interacts with (6S)-5,6,7,8-tetrahydrofolate; that stretch reads SLLP.

It belongs to the Fmt family.

The enzyme catalyses L-methionyl-tRNA(fMet) + (6R)-10-formyltetrahydrofolate = N-formyl-L-methionyl-tRNA(fMet) + (6S)-5,6,7,8-tetrahydrofolate + H(+). Functionally, attaches a formyl group to the free amino group of methionyl-tRNA(fMet). The formyl group appears to play a dual role in the initiator identity of N-formylmethionyl-tRNA by promoting its recognition by IF2 and preventing the misappropriation of this tRNA by the elongation apparatus. The chain is Methionyl-tRNA formyltransferase from Prochlorococcus marinus (strain MIT 9515).